The following is a 307-amino-acid chain: tRNA pseudouridine synthase B (307 aa).

D45 acts as the Nucleophile in catalysis.

Belongs to the pseudouridine synthase TruB family. Type 1 subfamily.

It catalyses the reaction uridine(55) in tRNA = pseudouridine(55) in tRNA. Its function is as follows. Responsible for synthesis of pseudouridine from uracil-55 in the psi GC loop of transfer RNAs. This chain is tRNA pseudouridine synthase B, found in Heliobacterium mobile (Heliobacillus mobilis).